A 420-amino-acid chain; its full sequence is Glutamyl-tRNA reductase (420 aa).

Substrate is bound by residues 49 to 52 (TCNR), serine 107, 112 to 114 (EPQ), and glutamine 118. Residue cysteine 50 is the Nucleophile of the active site. 187-192 (GAGETI) provides a ligand contact to NADP(+).

Belongs to the glutamyl-tRNA reductase family. Homodimer.

It catalyses the reaction (S)-4-amino-5-oxopentanoate + tRNA(Glu) + NADP(+) = L-glutamyl-tRNA(Glu) + NADPH + H(+). It participates in porphyrin-containing compound metabolism; protoporphyrin-IX biosynthesis; 5-aminolevulinate from L-glutamyl-tRNA(Glu): step 1/2. Its function is as follows. Catalyzes the NADPH-dependent reduction of glutamyl-tRNA(Glu) to glutamate 1-semialdehyde (GSA). In Methylococcus capsulatus (strain ATCC 33009 / NCIMB 11132 / Bath), this protein is Glutamyl-tRNA reductase.